A 374-amino-acid chain; its full sequence is Growth/differentiation factor 8 (374 aa).

An N-terminal signal peptide occupies residues 1 to 22; the sequence is MHFTQVLISLSVLIACGPVGYG. A propeptide spanning residues 23–265 is cleaved from the precursor; that stretch reads DITAHQQPST…ISEGPKRIRR (243 aa). N-linked (GlcNAc...) asparagine glycans are attached at residues N72 and N274. Intrachain disulfides connect C271/C281, C280/C339, C308/C371, and C312/C373.

It belongs to the TGF-beta family. In terms of assembly, homodimer; disulfide-linked. In terms of tissue distribution, predominantly expressed in muscle. At hatching, expression is strongest in the skin epithelium, and is also found in the retina and brain. From day 28, expressed in skeletal muscle. In the adult, highest expression is seen in the gastrointestinal tract, brain, muscle, heart and testis. Also expressed in the adult pharynx, kidney, spleen, liver, gill, eyes, skin, swim bladder and ovary.

It is found in the secreted. Functionally, acts specifically as a negative regulator of skeletal muscle growth. May down-regulate muscle-specific transcription factors such as myod and myog. This is Growth/differentiation factor 8 (mstnb) from Danio rerio (Zebrafish).